The sequence spans 425 residues: Serine--tRNA ligase (425 aa).

226 to 228 (TSE) contacts L-serine. ATP-binding positions include 257–259 (RRE) and V273. E280 is a binding site for L-serine. 344 to 347 (ELTS) lines the ATP pocket. Residue T382 coordinates L-serine.

The protein belongs to the class-II aminoacyl-tRNA synthetase family. Type-1 seryl-tRNA synthetase subfamily. Homodimer. The tRNA molecule binds across the dimer.

The protein localises to the cytoplasm. The catalysed reaction is tRNA(Ser) + L-serine + ATP = L-seryl-tRNA(Ser) + AMP + diphosphate + H(+). The enzyme catalyses tRNA(Sec) + L-serine + ATP = L-seryl-tRNA(Sec) + AMP + diphosphate + H(+). Its pathway is aminoacyl-tRNA biosynthesis; selenocysteinyl-tRNA(Sec) biosynthesis; L-seryl-tRNA(Sec) from L-serine and tRNA(Sec): step 1/1. In terms of biological role, catalyzes the attachment of serine to tRNA(Ser). Is also able to aminoacylate tRNA(Sec) with serine, to form the misacylated tRNA L-seryl-tRNA(Sec), which will be further converted into selenocysteinyl-tRNA(Sec). The polypeptide is Serine--tRNA ligase (Mycobacterium avium (strain 104)).